The chain runs to 473 residues: Adenosylhomocysteinase (473 aa).

Residues 58-62 (HMTIQ), D135, and E197 contribute to the substrate site. Position 198-200 (198-200 (TTT)) interacts with NAD(+). Substrate contacts are provided by K227 and D231. NAD(+)-binding positions include N232, V265, E284, N319, 340 to 342 (IGH), and N385. H342 is a binding site for substrate. Substrate is bound at residue H392. Residues K467 and Y471 each coordinate NAD(+).

Belongs to the adenosylhomocysteinase family. Homotetramer; dimer of dimers. NAD(+) serves as cofactor.

It is found in the cytoplasm. It catalyses the reaction S-adenosyl-L-homocysteine + H2O = L-homocysteine + adenosine. Its pathway is amino-acid biosynthesis; L-homocysteine biosynthesis; L-homocysteine from S-adenosyl-L-homocysteine: step 1/1. May play a key role in the regulation of the intracellular concentration of adenosylhomocysteine, which is a strong inhibitor of SAM-dependent methyltransferases. Catalyzes the hydrolysis of S-adenosyl-L-homocysteine into L-homocysteine and adenosine. The polypeptide is Adenosylhomocysteinase (Bradyrhizobium elkanii).